The chain runs to 1026 residues: Multidrug resistance protein MdtC (1026 aa).

The next 11 helical transmembrane spans lie at 15–35 (ILIA…LPVA), 333–353 (EVEE…FLFL), 360–380 (LIPA…MYLC), 387–407 (LSLM…IVVL), 431–451 (VGFT…PLLL), 463–483 (FAVT…TLTP), 528–548 (LVGV…IAIP), 853–873 (LILI…LYES), 897–917 (LFNA…IGIV), 953–973 (PIMM…LSGG), and 984–1004 (ITIV…TPVV).

The protein belongs to the resistance-nodulation-cell division (RND) (TC 2.A.6) family. MdtC subfamily. In terms of assembly, part of a tripartite efflux system composed of MdtA, MdtB and MdtC. MdtC forms a heteromultimer with MdtB.

The protein localises to the cell inner membrane. In Salmonella gallinarum (strain 287/91 / NCTC 13346), this protein is Multidrug resistance protein MdtC.